The following is a 101-amino-acid chain: Urease subunit beta (101 aa).

It belongs to the urease beta subunit family. As to quaternary structure, heterotrimer of UreA (gamma), UreB (beta) and UreC (alpha) subunits. Three heterotrimers associate to form the active enzyme.

Its subcellular location is the cytoplasm. It catalyses the reaction urea + 2 H2O + H(+) = hydrogencarbonate + 2 NH4(+). The protein operates within nitrogen metabolism; urea degradation; CO(2) and NH(3) from urea (urease route): step 1/1. The polypeptide is Urease subunit beta (Pseudomonas syringae pv. syringae (strain B728a)).